Reading from the N-terminus, the 326-residue chain is Adenosine receptor A1 (326 aa).

The Extracellular portion of the chain corresponds to 1 to 10 (MPPSISAFQA). Residues 11-33 (AYIGIEVLIALVSVPGNVLVIWA) traverse the membrane as a helical segment. Residues 34 to 46 (VKVNQALRDATFC) are Cytoplasmic-facing. The helical transmembrane segment at 47–69 (FIVSLAVADVAVGALVIPLAILI) threads the bilayer. Residues 70–80 (NIGPRTYFHTC) are Extracellular-facing. The cysteines at positions 80 and 169 are disulfide-linked. Residues 81–102 (LKVACPVLILTQSSILALLAIA) form a helical membrane-spanning segment. At 103–123 (VDRYLRVKIPLRYKTVVTPRR) the chain is on the cytoplasmic side. Residues 124–146 (AVVAITGCWILSFVVGLTPMFGW) traverse the membrane as a helical segment. Residues 147–176 (NNLSAVERDWLANGSVGEPVIECQFEKVIS) are Extracellular-facing. N-linked (GlcNAc...) asparagine glycans are attached at residues Asn-148 and Asn-159. A helical membrane pass occupies residues 177–201 (MEYMVYFNFFVWVLPPLLLMVLIYM). At 202 to 235 (EVFYLIRKQLNKKVSASSGDPQKYYGKELKIAKS) the chain is on the cytoplasmic side. The chain crosses the membrane as a helical span at residues 236–259 (LALILFLFALSWLPLHILNCITLF). Residues 260–267 (CPSCHMPR) are Extracellular-facing. A helical transmembrane segment spans residues 268-292 (ILIYIAIFLSHGNSAMNPIVYAFRI). The Cytoplasmic portion of the chain corresponds to 293–326 (QKFRVTFLKIWNDHFRCQPAPPVDEDAPAERPDD). A lipid anchor (S-palmitoyl cysteine) is attached at Cys-309.

Belongs to the G-protein coupled receptor 1 family.

It is found in the cell membrane. Functionally, receptor for adenosine. The activity of this receptor is mediated by G proteins which inhibit adenylyl cyclase. This is Adenosine receptor A1 (ADORA1) from Bos taurus (Bovine).